A 360-amino-acid chain; its full sequence is Glutamate 5-kinase (360 aa).

K7 serves as a coordination point for ATP. Substrate-binding residues include S47, D134, and N146. Residues 166-167 and 210-216 contribute to the ATP site; these read TD and TGGISTK. The 82-residue stretch at 275–356 folds into the PUA domain; the sequence is VGKITLDDGA…SSIIVVHRDV (82 aa).

Belongs to the glutamate 5-kinase family.

The protein localises to the cytoplasm. The catalysed reaction is L-glutamate + ATP = L-glutamyl 5-phosphate + ADP. It participates in amino-acid biosynthesis; L-proline biosynthesis; L-glutamate 5-semialdehyde from L-glutamate: step 1/2. Catalyzes the transfer of a phosphate group to glutamate to form L-glutamate 5-phosphate. This Prochlorococcus marinus (strain MIT 9312) protein is Glutamate 5-kinase.